We begin with the raw amino-acid sequence, 237 residues long: MSRASLDKRPDEVAAMFDDVAPKYDVTNDVLSMGQTRRWRRLVVDAVGAVPGQRVLDVAAGTGTSSEPYADAGLDVVALDFSLGMLKVGKRRRPDIDFIAGDATALPFADNSFDAVTISFGLRNVNEPKKALAEMLRVTKPGGKLVVAEFSHPTFGPFRTVYTEYLMRALPAIANRSSSNPSAYVYLAESIRAWPDQDNLAQWIADVGWSDVSYRNLNGGLVALHRAFKEGKLEAKP.

Residues T62, D80, 102-103 (DA), and S119 each bind S-adenosyl-L-methionine.

It belongs to the class I-like SAM-binding methyltransferase superfamily. MenG/UbiE family.

It carries out the reaction a 2-demethylmenaquinol + S-adenosyl-L-methionine = a menaquinol + S-adenosyl-L-homocysteine + H(+). Its pathway is quinol/quinone metabolism; menaquinone biosynthesis; menaquinol from 1,4-dihydroxy-2-naphthoate: step 2/2. In terms of biological role, methyltransferase required for the conversion of demethylmenaquinol (DMKH2) to menaquinol (MKH2). The chain is Demethylmenaquinone methyltransferase from Renibacterium salmoninarum (strain ATCC 33209 / DSM 20767 / JCM 11484 / NBRC 15589 / NCIMB 2235).